Here is a 21-residue protein sequence, read N- to C-terminus: Glutathione S-transferase 1 (21 aa).

This sequence belongs to the GST superfamily. Phi family.

It carries out the reaction RX + glutathione = an S-substituted glutathione + a halide anion + H(+). In terms of biological role, conjugation of reduced glutathione to a wide number of exogenous and endogenous hydrophobic electrophiles. In plants, may have a detoxification role against certain herbicides. This chain is Glutathione S-transferase 1, found in Populus euphratica (Euphrates poplar).